Reading from the N-terminus, the 299-residue chain is Deoxyhypusine hydroxylase (299 aa).

HEAT-like PBS-type repeat units follow at residues 54–80 (LKHE…VLQD), 87–113 (VRHE…YSED), 174–200 (DRYR…GLRA), 205–231 (FRHE…ALRS), and 238–264 (VRHE…FAQD). Fe cation contacts are provided by H56, H89, and E90. Residues H207, H240, and E241 each contribute to the Fe cation site.

This sequence belongs to the deoxyhypusine hydroxylase family. Fe(2+) serves as cofactor.

The enzyme catalyses [eIF5A protein]-deoxyhypusine + AH2 + O2 = [eIF5A protein]-hypusine + A + H2O. It participates in protein modification; eIF5A hypusination. Functionally, catalyzes the hydroxylation of the N(6)-(4-aminobutyl)-L-lysine intermediate produced by deoxyhypusine synthase/DHPS on a critical lysine of the eukaryotic translation initiation factor 5A/eIF-5A. This is the second step of the post-translational modification of that lysine into an unusual amino acid residue named hypusine. Hypusination is unique to mature eIF-5A factor and is essential for its function. The chain is Deoxyhypusine hydroxylase from Gallus gallus (Chicken).